The following is a 161-amino-acid chain: ATP synthase subunit b (161 aa).

The chain crosses the membrane as a helical span at residues 1–21; it reads MYLNATILGQVIAFILFVWFC.

Belongs to the ATPase B chain family. In terms of assembly, F-type ATPases have 2 components, F(1) - the catalytic core - and F(0) - the membrane proton channel. F(1) has five subunits: alpha(3), beta(3), gamma(1), delta(1), epsilon(1). F(0) has three main subunits: a(1), b(2) and c(10-14). The alpha and beta chains form an alternating ring which encloses part of the gamma chain. F(1) is attached to F(0) by a central stalk formed by the gamma and epsilon chains, while a peripheral stalk is formed by the delta and b chains.

The protein localises to the cell inner membrane. Functionally, f(1)F(0) ATP synthase produces ATP from ADP in the presence of a proton or sodium gradient. F-type ATPases consist of two structural domains, F(1) containing the extramembraneous catalytic core and F(0) containing the membrane proton channel, linked together by a central stalk and a peripheral stalk. During catalysis, ATP synthesis in the catalytic domain of F(1) is coupled via a rotary mechanism of the central stalk subunits to proton translocation. In terms of biological role, component of the F(0) channel, it forms part of the peripheral stalk, linking F(1) to F(0). This chain is ATP synthase subunit b, found in Blochmanniella floridana.